The following is a 511-amino-acid chain: Probable Xaa-Pro aminopeptidase MAA_08947 (511 aa).

Asp-275, Asp-286, Glu-439, and Glu-480 together coordinate Mn(2+).

The protein belongs to the peptidase M24B family. It depends on Mn(2+) as a cofactor.

It catalyses the reaction Release of any N-terminal amino acid, including proline, that is linked to proline, even from a dipeptide or tripeptide.. In terms of biological role, catalyzes the removal of a penultimate prolyl residue from the N-termini of peptides. This is Probable Xaa-Pro aminopeptidase MAA_08947 from Metarhizium robertsii (strain ARSEF 23 / ATCC MYA-3075) (Metarhizium anisopliae (strain ARSEF 23)).